The following is a 1033-amino-acid chain: Potassium-transporting ATPase alpha chain 1 (1033 aa).

Topologically, residues 1–96 are cytoplasmic; sequence MGKENYELYS…NALRPPRGTP (96 aa). Tyr-6 and Tyr-9 each carry phosphotyrosine. The segment at 14–39 is disordered; sequence GTGPGGDMAAKMSKKKAGGGGGKKKE. The segment covering 25–38 has biased composition (basic residues); the sequence is MSKKKAGGGGGKKK. At Ser-26 the chain carries Phosphoserine. A helical membrane pass occupies residues 97–117; the sequence is EYVKFARQLAGGLQCLMWVAA. Topologically, residues 118 to 140 are lumenal; sequence AICLIAFAIQASEGDLTTDDNLY. A helical transmembrane segment spans residues 141 to 161; that stretch reads LALALIAVVVVTGCFGYYQEF. At 162 to 297 the chain is on the cytoplasmic side; that stretch reads KSTNIIASFK…NEKTPIAIEI (136 aa). The chain crosses the membrane as a helical span at residues 298–317; sequence EHFVDIIAGLAILFGATFFV. Residues 318-329 are Lumenal-facing; sequence VAMCIGYTFLRA. Residues 330–347 traverse the membrane as a helical segment; that stretch reads MVFFMAIVVAYVPEGLLA. Residues Val-338, Ala-339, Val-341, and Glu-343 each contribute to the K(+) site. Residues 348–781 are Cytoplasmic-facing; sequence TVTVCLSLTA…EQGRLIFDNL (434 aa). The active-site 4-aspartylphosphate intermediate is Asp-385. Mg(2+) is bound by residues Asp-385 and Thr-387. Phosphoserine occurs at positions 461 and 599. Residues Asp-726 and Asp-730 each contribute to the Mg(2+) site. A helical transmembrane segment spans residues 782-801; sequence KKSIAYTLTKNIPELTPYLI. Glu-795 provides a ligand contact to K(+). At 802-811 the chain is on the lumenal side; the sequence is YITVSVPLPL. The helical transmembrane segment at 812 to 832 threads the bilayer; sequence GCITILFIELCTDIFPSVSLA. Glu-820 is a K(+) binding site. The Cytoplasmic portion of the chain corresponds to 833 to 852; sequence YEKAESDIMHLRPRNPRRDR. Ser-838 is subject to Phosphoserine. Residues 853 to 875 traverse the membrane as a helical segment; it reads LVNEPLAAYSYFQIGAIQSFAGF. Residues 876–927 lie on the Lumenal side of the membrane; that stretch reads ADYFTAMAQEGWFPLLCVGLRPQWEDHHLQDLQDSYGQEWTFGQRLYQQYTC. A helical transmembrane segment spans residues 928–947; that stretch reads YTVFFISIEMCQIADVLIRK. Over 948-961 the chain is Cytoplasmic; that stretch reads TRRLSAFQQGFFRN. Ser-952 carries the phosphoserine; by PKA modification. A helical membrane pass occupies residues 962-980; the sequence is RILVIAIVFQVCIGCFLCY. Residues 981 to 995 are Lumenal-facing; the sequence is CPGMPNIFNFMPIRF. The helical transmembrane segment at 996-1016 threads the bilayer; the sequence is QWWLVPMPFGLLIFVYDEIRK. At 1017-1033 the chain is on the cytoplasmic side; it reads LGVRCCPGSWWDQELYY.

This sequence belongs to the cation transport ATPase (P-type) (TC 3.A.3) family. Type IIC subfamily. As to quaternary structure, the gastric H(+)/K(+) ATPase pump is composed of the catalytic alpha subunit ATP4A and the regulatory beta subunit ATP4B. Interacts (via the P-domain) with ATP4B (via N-terminus); this interaction stabilizes the lumenal-open E2 conformation state and prevents the reverse reaction of the transport cycle.

The protein localises to the apical cell membrane. The catalysed reaction is K(+)(out) + ATP + H2O + H(+)(in) = K(+)(in) + ADP + phosphate + 2 H(+)(out). In terms of biological role, the catalytic subunit of the gastric H(+)/K(+) ATPase pump which transports H(+) ions in exchange for K(+) ions across the apical membrane of parietal cells. Uses ATP as an energy source to pump H(+) ions to the gastric lumen while transporting K(+) ion from the lumen into the cell. Remarkably generates a million-fold proton gradient across the gastric parietal cell membrane, acidifying the gastric juice down to pH 1. Within a transport cycle, the transfer of a H(+) ion across the membrane is coupled to ATP hydrolysis and is associated with a transient phosphorylation that shifts the pump conformation from inward-facing (E1) to outward-facing state (E2). The release of the H(+) ion in the stomach lumen is followed by binding of K(+) ion converting the pump conformation back to the E1 state. In Rattus norvegicus (Rat), this protein is Potassium-transporting ATPase alpha chain 1 (Atp4a).